The following is a 946-amino-acid chain: Protein dct-6 (946 aa).

Positions 326–363 (YMDMNDQIEQMIALLVDQLEELEKLEQLCDEVQKTGNQ) form a coiled coil.

Functionally, may have a role in tumor suppression. This Caenorhabditis briggsae protein is Protein dct-6.